Consider the following 50-residue polypeptide: uncharacterized protein (50 aa).

This is an uncharacterized protein from Saccharomyces cerevisiae (strain ATCC 204508 / S288c) (Baker's yeast).